Consider the following 151-residue polypeptide: Aspartate carbamoyltransferase regulatory chain (151 aa).

The Zn(2+) site is built by Cys108, Cys113, Cys138, and Cys141.

The protein belongs to the PyrI family. Contains catalytic and regulatory chains. Zn(2+) serves as cofactor.

Its function is as follows. Involved in allosteric regulation of aspartate carbamoyltransferase. The protein is Aspartate carbamoyltransferase regulatory chain of Pyrobaculum neutrophilum (strain DSM 2338 / JCM 9278 / NBRC 100436 / V24Sta) (Thermoproteus neutrophilus).